The following is a 147-amino-acid chain: Large ribosomal subunit protein uL16 (147 aa).

This sequence belongs to the universal ribosomal protein uL16 family. Part of the 50S ribosomal subunit.

Its function is as follows. Binds 23S rRNA and is also seen to make contacts with the A and possibly P site tRNAs. The protein is Large ribosomal subunit protein uL16 of Clostridium novyi (strain NT).